The chain runs to 712 residues: Sterol uptake control protein 2 (712 aa).

Over residues 1–19 (MMMTVKQESPNSTLNTSEF) the composition is skewed to polar residues. A disordered region spans residues 1 to 52 (MMMTVKQESPNSTLNTSEFSSDENLKTNNSEPPKKVSKSSTGKRKYHQKSRN). A compositionally biased stretch (basic residues) spans 35–50 (KVSKSSTGKRKYHQKS). Residues 54-81 (CSTCKKRRVKCDEQRPVCGNCTKLKLDC) constitute a DNA-binding region (zn(2)-C6 fungal-type). 2 disordered regions span residues 95–150 (KKDI…VIPP) and 236–342 (TTVP…ANPL). Polar residues-rich tracts occupy residues 113–143 (STVSAASDSESTTQQATPSLTPSPNHSQDIK), 252–306 (RKSQ…SGSP), and 326–337 (KSLPNISPNMSI).

The protein resides in the nucleus. In terms of biological role, transcription factor involved in the regulation of ergosterol biosynthetic genes such as ERG2 and ERG11 through direct binding to sterol response elements (SREs) in the promoters. Also binds to its own promoter on 2 cis-acting elements to promote autoregulation. Regulates sterol uptake across the plasma membrane. Acts as a major regulator of ascorbic acid-induced response. Plays a role in the triggering of pyroptosis, an inflammasome-mediated programmed cell death pathway in macrophages, allowing macrophages escaping. This Candida albicans (strain SC5314 / ATCC MYA-2876) (Yeast) protein is Sterol uptake control protein 2.